The following is a 456-amino-acid chain: MPQNTLNIVILAAGKGTRMYSKMPKVLHRIGGKPMVGRVIDTAAALNPQNICVVIGHGKEQVLDTVKRDVVWVEQTEQLGTGHAVKTALPHLSAEGRTLVLYGDVPLIDVETLETLLEAAGNEVGLLTDVPNDPTGLGRIIRDSNGSVTAIVEEKDADAVQKAVKEINTGILVLPNAKLENWLNSLSSNNAQGEYYLTDLIAKAVADGIKVHPVQVRASHLAAGVNNKLQLTELERIFQTEQAQELLKAGVTLRDPARFDLRGRLKHGQDVVIDVNCIFEGDIELGDNVEIGANCVIKNAKIGANSKIAPFSHLESCEVGENNRIGPYARLRPQARLADDVHVGNFVEIKNAAIGKGTKANHLTYIGDAEVGCKTNFGAGTIIANYDGVHKHKTVIGDEVRIGSNCVLVAPVTLGNKVTTGAGSTITRNVEDNKLALARARQTVIEGWVRPEKDKQ.

The pyrophosphorylase stretch occupies residues Met-1–Lys-228. Residues Leu-11–Gly-14, Lys-25, Gln-75, Gly-80–Thr-81, Tyr-102–Asp-104, Gly-138, Glu-153, Asn-168, and Asn-226 contribute to the UDP-N-acetyl-alpha-D-glucosamine site. Position 104 (Asp-104) interacts with Mg(2+). Position 226 (Asn-226) interacts with Mg(2+). The tract at residues Leu-229 to Ala-249 is linker. An N-acetyltransferase region spans residues Gly-250–Gln-456. Residues Arg-332 and Lys-350 each contribute to the UDP-N-acetyl-alpha-D-glucosamine site. The active-site Proton acceptor is the His-362. UDP-N-acetyl-alpha-D-glucosamine is bound by residues Tyr-365 and Asn-376. Acetyl-CoA is bound by residues Ala-379, Asn-385 to Tyr-386, Ser-404, Ala-422, and Arg-439.

It in the N-terminal section; belongs to the N-acetylglucosamine-1-phosphate uridyltransferase family. This sequence in the C-terminal section; belongs to the transferase hexapeptide repeat family. In terms of assembly, homotrimer. The cofactor is Mg(2+).

The protein localises to the cytoplasm. It carries out the reaction alpha-D-glucosamine 1-phosphate + acetyl-CoA = N-acetyl-alpha-D-glucosamine 1-phosphate + CoA + H(+). It catalyses the reaction N-acetyl-alpha-D-glucosamine 1-phosphate + UTP + H(+) = UDP-N-acetyl-alpha-D-glucosamine + diphosphate. The protein operates within nucleotide-sugar biosynthesis; UDP-N-acetyl-alpha-D-glucosamine biosynthesis; N-acetyl-alpha-D-glucosamine 1-phosphate from alpha-D-glucosamine 6-phosphate (route II): step 2/2. It functions in the pathway nucleotide-sugar biosynthesis; UDP-N-acetyl-alpha-D-glucosamine biosynthesis; UDP-N-acetyl-alpha-D-glucosamine from N-acetyl-alpha-D-glucosamine 1-phosphate: step 1/1. It participates in bacterial outer membrane biogenesis; LPS lipid A biosynthesis. In terms of biological role, catalyzes the last two sequential reactions in the de novo biosynthetic pathway for UDP-N-acetylglucosamine (UDP-GlcNAc). The C-terminal domain catalyzes the transfer of acetyl group from acetyl coenzyme A to glucosamine-1-phosphate (GlcN-1-P) to produce N-acetylglucosamine-1-phosphate (GlcNAc-1-P), which is converted into UDP-GlcNAc by the transfer of uridine 5-monophosphate (from uridine 5-triphosphate), a reaction catalyzed by the N-terminal domain. The protein is Bifunctional protein GlmU of Neisseria meningitidis serogroup B (strain ATCC BAA-335 / MC58).